The primary structure comprises 833 residues: Coiled-coil domain-containing protein 110 (833 aa).

Positions 431-778 form a coiled coil; sequence LQNYLKESVQ…REYLNLSDKI (348 aa).

It localises to the nucleus. This chain is Coiled-coil domain-containing protein 110 (CCDC110), found in Macaca fascicularis (Crab-eating macaque).